The sequence spans 96 residues: DNA-directed RNA polymerase subunit Rpo11 (96 aa).

The protein belongs to the archaeal Rpo11/eukaryotic RPB11/RPC19 RNA polymerase subunit family. As to quaternary structure, part of the RNA polymerase complex.

The protein localises to the cytoplasm. It catalyses the reaction RNA(n) + a ribonucleoside 5'-triphosphate = RNA(n+1) + diphosphate. Its function is as follows. DNA-dependent RNA polymerase (RNAP) catalyzes the transcription of DNA into RNA using the four ribonucleoside triphosphates as substrates. The polypeptide is DNA-directed RNA polymerase subunit Rpo11 (Nanoarchaeum equitans (strain Kin4-M)).